The chain runs to 116 residues: Tachykinin-3 (116 aa).

The signal sequence occupies residues 1–20 (MRSAMLFAAVLALSLAWTFG). Positions 21-79 (AVCEEPQGQGGRLSKDSDLYQLPPSLLRRLYDSRPVSLEGLLKVLSKASVGPKETSLPQ) are excised as a propeptide. Met91 carries the post-translational modification Methionine amide. A disordered region spans residues 93–116 (KRNSQPDTPTDVVEENTPSFGILK). Positions 95–116 (NSQPDTPTDVVEENTPSFGILK) are excised as a propeptide.

This sequence belongs to the tachykinin family.

It is found in the secreted. Tachykinins are active peptides which excite neurons, evoke behavioral responses, are potent vasodilators and secretagogues, and contract (directly or indirectly) many smooth muscles. Is a critical central regulator of gonadal function. The sequence is that of Tachykinin-3 (Tac3) from Mus musculus (Mouse).